The following is a 333-amino-acid chain: Holliday junction branch migration complex subunit RuvB (333 aa).

The large ATPase domain (RuvB-L) stretch occupies residues 1-173; sequence MTAPENLDAA…FGIIEHLEYY (173 aa). Residues L11, R12, G53, K56, T57, T58, 120–122, R163, Y173, and R210 each bind ATP; that span reads EDF. T57 is a binding site for Mg(2+). A small ATPAse domain (RuvB-S) region spans residues 174–244; it reads TAEEIATNLL…RAQSALDKLG (71 aa). A head domain (RuvB-H) region spans residues 247-333; that stretch reads SAGLDDRDKK…IDDGNGIFLN (87 aa). DNA-binding residues include R302 and R307.

It belongs to the RuvB family. In terms of assembly, homohexamer. Forms an RuvA(8)-RuvB(12)-Holliday junction (HJ) complex. HJ DNA is sandwiched between 2 RuvA tetramers; dsDNA enters through RuvA and exits via RuvB. An RuvB hexamer assembles on each DNA strand where it exits the tetramer. Each RuvB hexamer is contacted by two RuvA subunits (via domain III) on 2 adjacent RuvB subunits; this complex drives branch migration. In the full resolvosome a probable DNA-RuvA(4)-RuvB(12)-RuvC(2) complex forms which resolves the HJ.

The protein resides in the cytoplasm. It catalyses the reaction ATP + H2O = ADP + phosphate + H(+). Functionally, the RuvA-RuvB-RuvC complex processes Holliday junction (HJ) DNA during genetic recombination and DNA repair, while the RuvA-RuvB complex plays an important role in the rescue of blocked DNA replication forks via replication fork reversal (RFR). RuvA specifically binds to HJ cruciform DNA, conferring on it an open structure. The RuvB hexamer acts as an ATP-dependent pump, pulling dsDNA into and through the RuvAB complex. RuvB forms 2 homohexamers on either side of HJ DNA bound by 1 or 2 RuvA tetramers; 4 subunits per hexamer contact DNA at a time. Coordinated motions by a converter formed by DNA-disengaged RuvB subunits stimulates ATP hydrolysis and nucleotide exchange. Immobilization of the converter enables RuvB to convert the ATP-contained energy into a lever motion, pulling 2 nucleotides of DNA out of the RuvA tetramer per ATP hydrolyzed, thus driving DNA branch migration. The RuvB motors rotate together with the DNA substrate, which together with the progressing nucleotide cycle form the mechanistic basis for DNA recombination by continuous HJ branch migration. Branch migration allows RuvC to scan DNA until it finds its consensus sequence, where it cleaves and resolves cruciform DNA. The chain is Holliday junction branch migration complex subunit RuvB from Deinococcus radiodurans (strain ATCC 13939 / DSM 20539 / JCM 16871 / CCUG 27074 / LMG 4051 / NBRC 15346 / NCIMB 9279 / VKM B-1422 / R1).